The chain runs to 877 residues: Alanine--tRNA ligase (877 aa).

Residues His-561, His-565, Cys-669, and His-673 each contribute to the Zn(2+) site.

Belongs to the class-II aminoacyl-tRNA synthetase family. The cofactor is Zn(2+).

It is found in the cytoplasm. The enzyme catalyses tRNA(Ala) + L-alanine + ATP = L-alanyl-tRNA(Ala) + AMP + diphosphate. Its function is as follows. Catalyzes the attachment of alanine to tRNA(Ala) in a two-step reaction: alanine is first activated by ATP to form Ala-AMP and then transferred to the acceptor end of tRNA(Ala). Also edits incorrectly charged Ser-tRNA(Ala) and Gly-tRNA(Ala) via its editing domain. The chain is Alanine--tRNA ligase from Endomicrobium trichonymphae.